We begin with the raw amino-acid sequence, 586 residues long: Phosphomethylpyrimidine synthase (586 aa).

A disordered region spans residues 1 to 33 (MKQSVSAEQIELKSSLPGSKKVYVDGPREGMKV). Residues 22–33 (VYVDGPREGMKV) are compositionally biased toward basic and acidic residues. Residues asparagine 193, methionine 222, tyrosine 251, histidine 287, 307 to 309 (SRG), 348 to 351 (DGLR), and glutamate 387 contribute to the substrate site. Histidine 391 contacts Zn(2+). Tyrosine 414 contributes to the substrate binding site. A Zn(2+)-binding site is contributed by histidine 455. Positions 535, 538, and 543 each coordinate [4Fe-4S] cluster.

Belongs to the ThiC family. The cofactor is [4Fe-4S] cluster.

The catalysed reaction is 5-amino-1-(5-phospho-beta-D-ribosyl)imidazole + S-adenosyl-L-methionine = 4-amino-2-methyl-5-(phosphooxymethyl)pyrimidine + CO + 5'-deoxyadenosine + formate + L-methionine + 3 H(+). Its pathway is cofactor biosynthesis; thiamine diphosphate biosynthesis. In terms of biological role, catalyzes the synthesis of the hydroxymethylpyrimidine phosphate (HMP-P) moiety of thiamine from aminoimidazole ribotide (AIR) in a radical S-adenosyl-L-methionine (SAM)-dependent reaction. The chain is Phosphomethylpyrimidine synthase from Bacillus cereus (strain B4264).